A 318-amino-acid chain; its full sequence is Melanocyte-stimulating hormone receptor (318 aa).

Residues 1–37 (MPMQGAQRKLLGSLNSTPTATSNLGLAANRTGAPCLE) are Extracellular-facing. N-linked (GlcNAc...) asparagine glycosylation occurs at Asn29. The helical transmembrane segment at 38–63 (LPIPNGLFLSLGLVSLVENVLVVAAI) threads the bilayer. Topologically, residues 64 to 72 (AKNRNLHSS) are cytoplasmic. A helical membrane pass occupies residues 73-93 (MYCFICCLALSDLLVSGSNML). Over 94–118 (ETAVILLLEAGVLATRASVVQQLHN) the chain is Extracellular. Residues 119–140 (TIDVLTCSSMLCSLCFLGAIAV) form a helical membrane-spanning segment. Over 141–163 (DRYISIFYALRYHSIMTLPRAQR) the chain is Cytoplasmic. The chain crosses the membrane as a helical span at residues 164-183 (AVAAIWVASVLSSTLFITYY). At 184–191 (DHAAVLLC) the chain is on the extracellular side. The chain crosses the membrane as a helical span at residues 192–211 (LMVFFLAMLVLMAVLYVHML). Over 212–240 (ARARQHAQGIIRLHKRQPPAHKGFGLRGA) the chain is Cytoplasmic. A helical transmembrane segment spans residues 241-266 (ATLTILLGIFFLCWGPFFLCLTLVVF). Topologically, residues 267–279 (CPQHLTCNCIFKN) are extracellular. Residues 280–300 (FKVFLTLIICNTIIDPLIYAF) form a helical membrane-spanning segment. The Cytoplasmic segment spans residues 301 to 317 (RSQELRRMLKEVLGRGR).

This sequence belongs to the G-protein coupled receptor 1 family. As to quaternary structure, interacts with MGRN1, but does not undergo MGRN1-mediated ubiquitination; this interaction competes with GNAS-binding and thus inhibits agonist-induced cAMP production. Interacts with OPN3; the interaction results in a decrease in MC1R-mediated cAMP signaling and ultimately a decrease in melanin production in melanocytes.

Its subcellular location is the cell membrane. Receptor for MSH (alpha, beta and gamma) and ACTH. The activity of this receptor is mediated by G proteins which activate adenylate cyclase. Mediates melanogenesis, the production of eumelanin (black/brown) and phaeomelanin (red/yellow), via regulation of cAMP signaling in melanocytes. The protein is Melanocyte-stimulating hormone receptor (MC1R) of Leontopithecus rosalia (Golden lion tamarin).